Consider the following 129-residue polypeptide: Small ribosomal subunit protein uS9 (129 aa).

Residues 107 to 129 are disordered; it reads SRTVERKKYGRRKARRSPQFSKR. Residues 114–129 are compositionally biased toward basic residues; that stretch reads KYGRRKARRSPQFSKR.

The protein belongs to the universal ribosomal protein uS9 family.

The sequence is that of Small ribosomal subunit protein uS9 from Campylobacter jejuni subsp. jejuni serotype O:23/36 (strain 81-176).